We begin with the raw amino-acid sequence, 80 residues long: Clavanin-A (80 aa).

Positions 1–19 (MKTTILILLILGLGINAKS) are cleaved as a signal peptide. Residues 20 to 29 (LEERKSEEEK) constitute a propeptide that is removed on maturation. Phenylalanine amide is present on F52. Positions 54 to 80 (DDQQDNGKFYGHYAEDNGKHWYDTGDQ) are excised as a propeptide.

It localises to the secreted. Has antimicrobial activity. This Styela clava (Sea squirt) protein is Clavanin-A.